Consider the following 205-residue polypeptide: GTP cyclohydrolase-2 (205 aa).

GTP is bound at residue 49-53 (RLHSE). Residues cysteine 54, cysteine 65, and cysteine 67 each coordinate Zn(2+). GTP contacts are provided by residues glutamine 70, 92 to 94 (EGR), and threonine 114. Aspartate 126 serves as the catalytic Proton acceptor. Catalysis depends on arginine 128, which acts as the Nucleophile. Residues threonine 149 and lysine 154 each coordinate GTP.

It belongs to the GTP cyclohydrolase II family. Requires Zn(2+) as cofactor.

The enzyme catalyses GTP + 4 H2O = 2,5-diamino-6-hydroxy-4-(5-phosphoribosylamino)-pyrimidine + formate + 2 phosphate + 3 H(+). The protein operates within cofactor biosynthesis; riboflavin biosynthesis; 5-amino-6-(D-ribitylamino)uracil from GTP: step 1/4. In terms of biological role, catalyzes the conversion of GTP to 2,5-diamino-6-ribosylamino-4(3H)-pyrimidinone 5'-phosphate (DARP), formate and pyrophosphate. This Pseudomonas entomophila (strain L48) protein is GTP cyclohydrolase-2.